A 365-amino-acid chain; its full sequence is Chorismate synthase (365 aa).

Positions 48 and 54 each coordinate NADP(+). FMN contacts are provided by residues Arg-131–Ser-133, Asn-243–Ala-244, Gly-288, Lys-303–Ser-307, and Arg-329.

This sequence belongs to the chorismate synthase family. In terms of assembly, homotetramer. Requires FMNH2 as cofactor.

It catalyses the reaction 5-O-(1-carboxyvinyl)-3-phosphoshikimate = chorismate + phosphate. Its pathway is metabolic intermediate biosynthesis; chorismate biosynthesis; chorismate from D-erythrose 4-phosphate and phosphoenolpyruvate: step 7/7. Its function is as follows. Catalyzes the anti-1,4-elimination of the C-3 phosphate and the C-6 proR hydrogen from 5-enolpyruvylshikimate-3-phosphate (EPSP) to yield chorismate, which is the branch point compound that serves as the starting substrate for the three terminal pathways of aromatic amino acid biosynthesis. This reaction introduces a second double bond into the aromatic ring system. The protein is Chorismate synthase of Sinorhizobium medicae (strain WSM419) (Ensifer medicae).